Here is a 116-residue protein sequence, read N- to C-terminus: Small ribosomal subunit protein bS16 (116 aa).

The protein belongs to the bacterial ribosomal protein bS16 family.

The protein is Small ribosomal subunit protein bS16 of Chlamydia trachomatis serovar A (strain ATCC VR-571B / DSM 19440 / HAR-13).